The chain runs to 471 residues: UDP-N-acetylmuramate--L-alanine ligase (471 aa).

Gly125 to Thr131 lines the ATP pocket.

Belongs to the MurCDEF family.

It is found in the cytoplasm. The enzyme catalyses UDP-N-acetyl-alpha-D-muramate + L-alanine + ATP = UDP-N-acetyl-alpha-D-muramoyl-L-alanine + ADP + phosphate + H(+). Its pathway is cell wall biogenesis; peptidoglycan biosynthesis. Its function is as follows. Cell wall formation. This Kineococcus radiotolerans (strain ATCC BAA-149 / DSM 14245 / SRS30216) protein is UDP-N-acetylmuramate--L-alanine ligase.